Reading from the N-terminus, the 1148-residue chain is Transcription-repair-coupling factor (1148 aa).

The Helicase ATP-binding domain occupies 615-776 (DMCQPLAMDR…MSGMRDLSII (162 aa)). ATP is bound at residue 628 to 635 (GDVGFGKT). The short motif at 729–732 (DEEH) is the DEEH box element. The 154-residue stretch at 798–951 (VREAILREIL…GFALATHDLE (154 aa)) folds into the Helicase C-terminal domain.

The protein in the N-terminal section; belongs to the UvrB family. This sequence in the C-terminal section; belongs to the helicase family. RecG subfamily. Monomer. Interacts with UvrA and RNAP.

The protein resides in the cytoplasm. Couples transcription and DNA repair by recognizing RNA polymerase (RNAP) stalled at DNA lesions. Mediates ATP-dependent release of RNAP and its truncated transcript from the DNA, and recruitment of nucleotide excision repair machinery to the damaged site. Can also dissociate RNAP that is blocked by low concentration of nucleoside triphosphates or by physical obstruction, such as bound proteins. In addition, can rescue arrested complexes by promoting forward translocation. Has ATPase activity, which is required for removal of stalled RNAP, but seems to lack helicase activity. May act through a translocase activity that rewinds upstream DNA, leading either to translocation or to release of RNAP when the enzyme active site cannot continue elongation. This Escherichia coli (strain K12) protein is Transcription-repair-coupling factor.